We begin with the raw amino-acid sequence, 327 residues long: Tetraspanin-4 (327 aa).

The Cytoplasmic portion of the chain corresponds to 1-6 (MRSRSN). A helical transmembrane segment spans residues 7 to 27 (LIGLINFFTFLLSIPILGGGI). The Extracellular segment spans residues 28 to 43 (WLSSRANSTDCLRFLQ). N-linked (GlcNAc...) asparagine glycosylation is present at asparagine 34. The helical transmembrane segment at 44–64 (WPLIIIGISIMVISLAGIAGA) threads the bilayer. Residues 65-75 (CYQNKFLMWLY) are Cytoplasmic-facing. A helical transmembrane segment spans residues 76-96 (LFTMFFVIAALIGFTIFAYVV). Residues 97-235 (TDKGSGRFVM…LGSLKKSWRK (139 aa)) lie on the Extracellular side of the membrane. The N-linked (GlcNAc...) asparagine glycan is linked to asparagine 187. A helical transmembrane segment spans residues 236-256 (VSVINIVVVIILVIFYVIACA). The Cytoplasmic portion of the chain corresponds to 257–287 (AYQNVKRMYNDEPVGEARMTNLILVIFKFKE). A helical membrane pass occupies residues 288-308 (ILVQFFFGIVFLLLFNGLMVC). The Extracellular segment spans residues 309-327 (CCNDKFAFSVFFFGYVTYA).

Belongs to the tetraspanin (TM4SF) family.

It is found in the membrane. In terms of biological role, may be involved in the regulation of cell differentiation. This Arabidopsis thaliana (Mouse-ear cress) protein is Tetraspanin-4 (TET4).